Reading from the N-terminus, the 102-residue chain is Large ribosomal subunit protein bL21 (102 aa).

This sequence belongs to the bacterial ribosomal protein bL21 family. As to quaternary structure, part of the 50S ribosomal subunit. Contacts protein L20.

Functionally, this protein binds to 23S rRNA in the presence of protein L20. The sequence is that of Large ribosomal subunit protein bL21 from Lawsonia intracellularis.